A 371-amino-acid polypeptide reads, in one-letter code: Nicotinate-nucleotide pyrophosphorylase [carboxylating], chloroplastic (371 aa).

The transit peptide at 1–48 directs the protein to the chloroplast; sequence MPAAAAAAAPPNPNVLQLAPRLRGLVSFPSSYSSSSPFSNRLRLRLPR. Residues R162, 193 to 195, R217, K227, E260, D287, 319 to 321, and 340 to 342 contribute to the substrate site; these read TRK, SGN, and SGA.

The protein belongs to the NadC/ModD family.

The protein resides in the plastid. It is found in the chloroplast. It catalyses the reaction nicotinate beta-D-ribonucleotide + CO2 + diphosphate = quinolinate + 5-phospho-alpha-D-ribose 1-diphosphate + 2 H(+). It participates in cofactor biosynthesis; NAD(+) biosynthesis; nicotinate D-ribonucleotide from quinolinate: step 1/1. Its function is as follows. Involved in the catabolism of quinolinic acid (QA). The protein is Nicotinate-nucleotide pyrophosphorylase [carboxylating], chloroplastic of Oryza sativa subsp. japonica (Rice).